The following is a 438-amino-acid chain: DNA primase DnaG (438 aa).

In terms of domain architecture, Toprim spans 169–243 (DSIIVVEGRA…DIDYVARAPY (75 aa)). Positions 175, 217, and 219 each coordinate Mg(2+).

It belongs to the archaeal DnaG primase family. Forms a ternary complex with MCM helicase and DNA. Mg(2+) is required as a cofactor.

The enzyme catalyses ssDNA + n NTP = ssDNA/pppN(pN)n-1 hybrid + (n-1) diphosphate.. RNA polymerase that catalyzes the synthesis of short RNA molecules used as primers for DNA polymerase during DNA replication. The sequence is that of DNA primase DnaG from Methanococcus maripaludis (strain C6 / ATCC BAA-1332).